The primary structure comprises 243 residues: Sugar fermentation stimulation protein homolog (243 aa).

It belongs to the SfsA family.

In Acaryochloris marina (strain MBIC 11017), this protein is Sugar fermentation stimulation protein homolog.